We begin with the raw amino-acid sequence, 443 residues long: KH domain-containing, RNA-binding, signal transduction-associated protein 1 (443 aa).

A disordered region spans residues methionine 1–alanine 94. 2 positions are modified to phosphoserine: serine 18 and serine 20. Position 21 is an N6-acetyllysine (lysine 21). Serine 29 is subject to Phosphoserine. At threonine 33 the chain carries Phosphothreonine. An asymmetric dimethylarginine; by PRMT1 mark is found at arginine 45 and arginine 52. Phosphoserine; by MAPK1 is present on serine 58. Residues threonine 61–proline 72 show a composition bias toward pro residues. Threonine 71 and threonine 84 each carry phosphothreonine; by MAPK1. A compositionally biased stretch (low complexity) spans serine 81–alanine 94. Residues lysine 96 and lysine 102 each participate in a glycyl lysine isopeptide (Lys-Gly) (interchain with G-Cter in SUMO2) cross-link. Residues glutamate 100 to methionine 260 are involved in homodimerization. The residue at position 113 (serine 113) is a Phosphoserine. A Glycyl lysine isopeptide (Lys-Gly) (interchain with G-Cter in SUMO2) cross-link involves residue lysine 139. A Phosphoserine modification is found at serine 150. A KH domain is found at asparagine 171–valine 197. An N6-acetyllysine; alternate modification is found at lysine 175. Lysine 175 participates in a covalent cross-link: Glycyl lysine isopeptide (Lys-Gly) (interchain with G-Cter in SUMO2); alternate. Threonine 183 carries the phosphothreonine modification. The tract at residues proline 280–threonine 317 is disordered. Omega-N-methylarginine occurs at positions 282, 284, and 291. Residues glycine 283–alanine 293 show a composition bias toward low complexity. The residue at position 304 (arginine 304) is an Asymmetric dimethylarginine. Residues glycine 307 to glycine 316 are compositionally biased toward low complexity. Residues arginine 310 and arginine 315 each carry the omega-N-methylarginine; by PRMT1 modification. Dimethylated arginine; alternate is present on arginine 320. At arginine 320 the chain carries Omega-N-methylarginine; by PRMT1; alternate. The residue at position 325 (arginine 325) is an Omega-N-methylarginine; by PRMT1. Residues glycine 326–proline 345 form a disordered region. Residues arginine 331 and arginine 340 each carry the dimethylated arginine; alternate modification. Arginine 331 and arginine 340 each carry omega-N-methylarginine; by PRMT1; alternate. The residue at position 331 (arginine 331) is an Asymmetric dimethylarginine; alternate. The interval glycine 351–tyrosine 443 is interaction with HNRNPA1. At tyrosine 387 the chain carries Phosphotyrosine. Position 390 is a phosphoserine (serine 390). Residues glycine 400 to arginine 420 form an interaction with ZBTB7A region. Positions tyrosine 411–tyrosine 443 are disordered. A Glycyl lysine isopeptide (Lys-Gly) (interchain with G-Cter in SUMO2) cross-link involves residue lysine 432. Positions alanine 434–tyrosine 443 are enriched in basic and acidic residues. Phosphotyrosine; by PTK6 is present on residues tyrosine 435, tyrosine 440, and tyrosine 443.

Belongs to the KHDRBS family. In terms of assembly, self-associates to form homooligomers when bound to RNA, oligomerization appears to be limited when binding to proteins. Forms a trimeric complex in the nucleus consisting of BANP, HDAC6 and KHDRBS1/SAM68; HDAC6 keeps KHDRBS1 in a deacetylated state which inhibits the inclusion of CD44 alternate exons. The complex is disrupted by MAPK1/MAPK3-mediated phosphorylation of BANP which results in BANP export to the cytoplasm. This facilitates acetylation of KHDRBS1 and CD44 variant exon inclusion. Interacts with KHDRBS3/SLIM-2 and KHDRBS2/SLIM-1; heterooligomer formation of KHDRBS family proteins may modulate RNA substrate specificity. Interacts with RASA1, FYN, GRB2, PLCG1, SRC, CBP and PRMT1. Interacts with PTK6 (via SH3 and SH2 domains). Forms a complex with ILF2, ILF3, YLPM1, RBMX, NCOA5 and PPP1CA. Binds WBP4/FBP21 (via WW domains), FNBP4/FBP30 (via WW domains). Interacts (via Arg/Gly-rich-flanked Pro-rich regions) with FYN (via the SH3 domain). Interacts with APC, HNRNPA1. Interacts with the non-receptor tyrosine kinase SRMS; the interaction leads to phosphorylation of KHDRBS1. Interacts with ZBTB7A; negatively regulates KHDRBS1 splicing activity toward BCL2L1. Tyrosine phosphorylated by several non-receptor tyrosine kinases including LCK, FYN and JAK3. Also tyrosine phosphorylated by the non-receptor tyrosine kinase SRMS in an EGF-dependent manner. Phosphorylation by PTK6 negatively regulates its RNA binding ability. Phosphorylation by PTK6 at Tyr-440 dictates the nuclear localization of KHDRBS1. Phosphorylation by MAPK1 at Ser-58, Thr-71 and Thr-84 regulates CD44 alternative splicing by promoting CD44 exon v5 inclusion. Post-translationally, acetylated. Positively correlates with ability to bind RNA. Deacetylated by HDAC6; this regulates alternative splicing by inhibiting the inclusion of CD44 alternate exons. In terms of processing, arginine methylation is required for nuclear localization. Inhibits interaction with Src-like SH3 domains, but not interaction with WW domains of WBP4/FBP21 and FNBP4/FBP30. As to expression, in adult cerebellum expressed in most neuronal cell populations, specifically in cerebellar granule cells of the internal granular layer, ROR(alpha)-positive Purkinje cells, internal granular layer and molecular layer interneurons (at protein level).

It localises to the nucleus. It is found in the cytoplasm. The protein localises to the membrane. Recruited and tyrosine phosphorylated by several receptor systems, for example the T-cell, leptin and insulin receptors. Once phosphorylated, functions as an adapter protein in signal transduction cascades by binding to SH2 and SH3 domain-containing proteins. Role in G2-M progression in the cell cycle. Represses CBP-dependent transcriptional activation apparently by competing with other nuclear factors for binding to CBP. Also acts as a putative regulator of mRNA stability and/or translation rates and mediates mRNA nuclear export. Positively regulates the association of constitutive transport element (CTE)-containing mRNA with large polyribosomes and translation initiation. May not be involved in the nucleocytoplasmic export of unspliced (CTE)-containing RNA species. RNA-binding protein that plays a role in the regulation of alternative splicing and influences mRNA splice site selection and exon inclusion. Binds to RNA containing 5'-[AU]UAA-3' as a bipartite motif spaced by more than 15 nucleotides. Binds poly(A). In cooperation with HNRNPA1 modulates alternative splicing of BCL2L1 by promoting splicing toward isoform Bcl-X(S), and of SMN1. Can regulate CD44 alternative splicing in a Ras pathway-dependent manner. Can regulate alternative splicing of NRXN1 and NRXN3 in the laminin G-like domain 6 containing the evolutionary conserved neurexin alternative spliced segment 4 (AS4) involved in neurexin selective targeting to postsynaptic partners. In a neuronal activity-dependent manner cooperates synergistically with KHDRBS2/SLIM-1 in regulation of NRXN1 exon skipping at AS4. The cooperation with KHDRBS2/SLIM-1 is antagonistic for regulation of NXRN3 alternative splicing at AS4. This is KH domain-containing, RNA-binding, signal transduction-associated protein 1 from Mus musculus (Mouse).